The primary structure comprises 455 residues: MKSVEDLEDKNVLVLGMAKSGISAALLLHRLRANVLVNDANANQPQELIEKLENKGIRMVLGEHPTNILSQNKIELIVKNPGIPYTNPVLVDAQARGIKIVSEPELAYWVMDSELIGVTGSNGKTTVTTLIQLMLDDNKKHAYVAGNIGVPATTVAQKATAEDKIVMELSSFMLAGIDRLHPHIAVLNNIFASHLDWHKTRENYVNDKMNITKNQTKDDFLVINWDNTEWQELAKRTQAKVVPFSRQGLTKSGAYEIEGKLYFKDELIMEADEIGIPGEQNVENALAAIAVAKIEKVSTAHIKQVLTTFGGVKHRIQYVENLNGRQFYNDSKATDIEATQVALRSFKKPVILIAGGLDRHDDLDRLIPDLEPNVKEVIVNGETAEKFKKIAQKAGISVIKDSSRVSESVEIAYQDSKEGDIILLSPAAASWDQYKTFEERGDEFIAAVQNLHKGE.

An ATP-binding site is contributed by 120–126; that stretch reads GSNGKTT.

It belongs to the MurCDEF family.

Its subcellular location is the cytoplasm. It carries out the reaction UDP-N-acetyl-alpha-D-muramoyl-L-alanine + D-glutamate + ATP = UDP-N-acetyl-alpha-D-muramoyl-L-alanyl-D-glutamate + ADP + phosphate + H(+). It functions in the pathway cell wall biogenesis; peptidoglycan biosynthesis. Functionally, cell wall formation. Catalyzes the addition of glutamate to the nucleotide precursor UDP-N-acetylmuramoyl-L-alanine (UMA). The polypeptide is UDP-N-acetylmuramoylalanine--D-glutamate ligase (Pediococcus pentosaceus (strain ATCC 25745 / CCUG 21536 / LMG 10740 / 183-1w)).